The sequence spans 282 residues: Small ribosomal subunit protein uS2 (282 aa).

Residues 245–265 (AEEAVEELPLPTGEAQDEASS) form a disordered region.

This sequence belongs to the universal ribosomal protein uS2 family.

This chain is Small ribosomal subunit protein uS2, found in Chlamydia trachomatis serovar A (strain ATCC VR-571B / DSM 19440 / HAR-13).